The chain runs to 261 residues: HLA class II histocompatibility antigen, DM alpha chain (261 aa).

The first 26 residues, Met-1–Ala-26, serve as a signal peptide directing secretion. The tract at residues Val-27 to Arg-124 is alpha-1. Residues Val-27 to Cys-233 lie on the Lumenal side of the membrane. Asn-41 carries an N-linked (GlcNAc...) asparagine glycan. Disulfide bonds link Cys-50/Cys-105 and Cys-147/Cys-202. In terms of domain architecture, Ig-like C1-type spans Pro-121 to Ala-215. An alpha-2 region spans residues Gly-125–Trp-217. Positions Val-218–Cys-233 are connecting peptide. The chain crosses the membrane as a helical span at residues Gly-234–Phe-254. Residues Arg-255–Asp-261 lie on the Cytoplasmic side of the membrane.

This sequence belongs to the MHC class II family. Heterodimer of an alpha chain (DMA) and a beta chain (DMB). Interacts with MHCII; this interaction mediates rapid selection of high-affinity peptides in a pH-dependent manner, with an optimum at pH 5.5.

It is found in the late endosome membrane. The protein localises to the lysosome membrane. Its function is as follows. Plays a critical role in catalyzing the release of class II-associated invariant chain peptide (CLIP) from newly synthesized MHC class II molecules and freeing the peptide binding site for acquisition of antigenic peptides. In B-cells, the interaction between HLA-DM and MHC class II molecules is regulated by HLA-DO. This chain is HLA class II histocompatibility antigen, DM alpha chain (HLA-DMA), found in Homo sapiens (Human).